Here is a 603-residue protein sequence, read N- to C-terminus: Palladin (603 aa).

Residues 63–67 are interaction with VASP; sequence FPPPP. Residue Ser-133 is modified to Phosphoserine. A disordered region spans residues 134 to 156; the sequence is PPTPAALLSPTKEPPPLLAKPKL. A Phosphothreonine modification is found at Thr-136. 4 positions are modified to phosphoserine: Ser-142, Ser-170, Ser-256, and Ser-261. The region spanning 278–362 is the Ig-like C2-type 1 domain; it reads PFFEMKLKHY…MAANTQGRVS (85 aa). Residues 373–402 are disordered; that stretch reads NQRGRSPRSPPGHPHARRPRSRSRDSGDEN. A phosphoserine mark is found at Ser-378, Ser-381, and Ser-393. Ser-395 is subject to Phosphoserine; by PKB/AKT1. Ser-398 is modified (phosphoserine). 2 Ig-like C2-type domains span residues 412–503 and 511–601; these read PHFL…LVVA and PVFI…ARLD. Interaction with EZR stretches follow at residues 414 to 503 and 513 to 603; these read FLQA…LVVA and FIEK…LDVY. Cys-433 and Cys-485 form a disulfide bridge.

Belongs to the myotilin/palladin family. In terms of assembly, interacts with EPS8. Interacts with LASP1. Interacts with VASP. Interacts with ACTN. Interacts with SORBS2. Interacts with PFN1. Interacts with LPP. Interacts with SPIN90. Interacts with SRC. Interacts with EZR. Interacts with RAI14. In terms of processing, phosphorylated predominantly on serines and, to a lesser extent, on tyrosines. Phosphorylation at Ser-395 by PKB/AKT1 modulates cytoskeletal organization and cell motility. In terms of tissue distribution, in adult central nervous system is detected in the brain and spinal cord, specially in the olfactory bulb, cerebral and cerebellar cortices, hippocampus, amygdala, superior colluculus, and superficial laminae of the spinal dorsal horn.

Its subcellular location is the cytoplasm. It localises to the cytoskeleton. The protein resides in the cell junction. The protein localises to the focal adhesion. It is found in the myofibril. Its subcellular location is the sarcomere. It localises to the z line. The protein resides in the cell projection. The protein localises to the ruffle. It is found in the podosome. Its subcellular location is the lamellipodium. It localises to the axon. The protein resides in the growth cone. Cytoskeletal protein required for organization of normal actin cytoskeleton. Roles in establishing cell morphology, motility, cell adhesion and cell-extracellular matrix interactions in a variety of cell types. May function as a scaffolding molecule with the potential to influence both actin polymerization and the assembly of existing actin filaments into higher-order arrays. Binds to proteins that bind to either monomeric or filamentous actin. Localizes at sites where active actin remodeling takes place, such as lamellipodia and membrane ruffles. Different isoforms may have functional differences. Plays a role in neurite outgrowth and in the establishment of polarity during neuronal morphogenesis. Participates in the acquisition of the reactive astrocyte morphology. This is Palladin (Palld) from Rattus norvegicus (Rat).